A 214-amino-acid chain; its full sequence is Large ribosomal subunit protein uL1 (214 aa).

It belongs to the universal ribosomal protein uL1 family. As to quaternary structure, part of the 50S ribosomal subunit.

In terms of biological role, binds directly to 23S rRNA. Probably involved in E site tRNA release. Protein L1 is also a translational repressor protein, it controls the translation of its operon by binding to its mRNA. This is Large ribosomal subunit protein uL1 from Methanopyrus kandleri (strain AV19 / DSM 6324 / JCM 9639 / NBRC 100938).